Consider the following 349-residue polypeptide: Early nodulin-like protein 2 (349 aa).

Residues 1–28 form the signal peptide; the sequence is MTFLKMKSLSFFFTILLSLSTLFTISNA. The Phytocyanin domain maps to 29–130; that stretch reads RKFNVGGSGA…GQKLNVVVIS (102 aa). An intrachain disulfide couples C84 to C118. The interval 136–330 is disordered; that stretch reads TAQSPHAAAP…GQKKSSANGM (195 aa). 2 stretches are compositionally biased toward low complexity: residues 145-201 and 224-234; these read PGSS…SPPG and TSPVSPSSAPM. Residues 249–260 show a composition bias toward polar residues; sequence IPPSSAPMTSPP. The segment covering 263 to 312 has biased composition (low complexity); that stretch reads MAPKSSSPVSNSPTVSPSLAPGGSTSSSPSDSPSGSAMGPSGDGPSAAGD. The GPI-anchor amidated serine moiety is linked to residue S325. Residues 326-349 constitute a propeptide, removed in mature form; that stretch reads SANGMTVMSITTVLSLVLTIFLSA.

This sequence belongs to the early nodulin-like (ENODL) family. In terms of tissue distribution, mostly expressed in leaves and roots, and, to a lower extent, in seedlings, stems and flowers, but barely in seeds.

It is found in the cell membrane. Its function is as follows. May act as a carbohydrate transporter. The sequence is that of Early nodulin-like protein 2 from Arabidopsis thaliana (Mouse-ear cress).